The chain runs to 306 residues: Pantothenate kinase (306 aa).

ATP is bound at residue 91-98 (GSVAVGKS).

This sequence belongs to the prokaryotic pantothenate kinase family.

The protein localises to the cytoplasm. It carries out the reaction (R)-pantothenate + ATP = (R)-4'-phosphopantothenate + ADP + H(+). It functions in the pathway cofactor biosynthesis; coenzyme A biosynthesis; CoA from (R)-pantothenate: step 1/5. The sequence is that of Pantothenate kinase from Streptococcus pyogenes serotype M49 (strain NZ131).